A 198-amino-acid polypeptide reads, in one-letter code: Ribonuclease HII (198 aa).

In terms of domain architecture, RNase H type-2 spans Glu-11–Glu-198. A divalent metal cation contacts are provided by Asp-17, Glu-18, and Asp-109.

It belongs to the RNase HII family. Mn(2+) serves as cofactor. Mg(2+) is required as a cofactor.

It is found in the cytoplasm. The enzyme catalyses Endonucleolytic cleavage to 5'-phosphomonoester.. Its function is as follows. Endonuclease that specifically degrades the RNA of RNA-DNA hybrids. The sequence is that of Ribonuclease HII from Mannheimia succiniciproducens (strain KCTC 0769BP / MBEL55E).